We begin with the raw amino-acid sequence, 1192 residues long: Pyruvate carboxylase (1192 aa).

Positions 1–23 are disordered; it reads MAAPRQPEEAVDDTEFIDDHHDQ. The 453-residue stretch at 40–492 folds into the Biotin carboxylation domain; that stretch reads QFQKILVANR…WTTFIDDTPE (453 aa). 3 residues coordinate ATP: K158, E242, and H277. The 198-residue stretch at 162–359 folds into the ATP-grasp domain; the sequence is RQLAIRCDVP…IVAAQIQIAA (198 aa). R334 is a catalytic residue. The Pyruvate carboxyltransferase domain maps to 578–846; that stretch reads CLIMDTTWRD…DPGLNSAQVR (269 aa). Residues 586–590 and R659 each bind substrate; that span reads RDAHQ. An a divalent metal cation-binding site is contributed by D587. 3 residues coordinate a divalent metal cation: K755, H785, and H787. The residue at position 755 (K755) is an N6-carboxylysine. T920 contributes to the substrate binding site. Residues 1115–1190 enclose the Biotinyl-binding domain; sequence KAELGDSSQV…DGQDLVCKIV (76 aa). Residue K1156 is modified to N6-biotinyllysine.

Biotin is required as a cofactor. Requires Zn(2+) as cofactor.

The protein localises to the cytoplasm. It catalyses the reaction hydrogencarbonate + pyruvate + ATP = oxaloacetate + ADP + phosphate + H(+). It participates in carbohydrate biosynthesis; gluconeogenesis. Pyruvate carboxylase catalyzes a 2-step reaction, involving the ATP-dependent carboxylation of the covalently attached biotin in the first step and the transfer of the carboxyl group to pyruvate in the second. This Aspergillus niger protein is Pyruvate carboxylase (pyc).